The primary structure comprises 602 residues: Aspartate--tRNA(Asp/Asn) ligase (602 aa).

Glu170 is a binding site for L-aspartate. The interval 194–197 (QLFK) is aspartate. Arg216 contributes to the L-aspartate binding site. ATP-binding positions include 216 to 218 (RDE) and Gln225. His448 provides a ligand contact to L-aspartate. Glu482 provides a ligand contact to ATP. Arg489 is an L-aspartate binding site. 534 to 537 (GWDR) provides a ligand contact to ATP. Positions 559 to 602 (GGVDPLTNAPAPITAQQRKESGVDAKPEPKGDAASAKPDAPADK) are disordered. Residues 575-589 (QRKESGVDAKPEPKG) show a composition bias toward basic and acidic residues. Residues 590-602 (DAASAKPDAPADK) show a composition bias toward low complexity.

This sequence belongs to the class-II aminoacyl-tRNA synthetase family. Type 1 subfamily. In terms of assembly, homodimer.

Its subcellular location is the cytoplasm. The enzyme catalyses tRNA(Asx) + L-aspartate + ATP = L-aspartyl-tRNA(Asx) + AMP + diphosphate. Its function is as follows. Aspartyl-tRNA synthetase with relaxed tRNA specificity since it is able to aspartylate not only its cognate tRNA(Asp) but also tRNA(Asn). Reaction proceeds in two steps: L-aspartate is first activated by ATP to form Asp-AMP and then transferred to the acceptor end of tRNA(Asp/Asn). The polypeptide is Aspartate--tRNA(Asp/Asn) ligase (Rhodococcus jostii (strain RHA1)).